The chain runs to 104 residues: UPF0213 protein YsiG (104 aa).

In terms of domain architecture, GIY-YIG spans 2-79 (NQYFTYILQC…KLVRKQKLSL (78 aa)).

Belongs to the UPF0213 family.

This is UPF0213 protein YsiG (ysiG) from Lactococcus lactis subsp. lactis (strain IL1403) (Streptococcus lactis).